The primary structure comprises 319 residues: Tetrahydromethanopterin S-methyltransferase subunit H (319 aa).

The protein belongs to the MtrH family. As to quaternary structure, the complex is composed of 8 subunits; MtrA, MtrB, MtrC, MtrD, MtrE, MtrF, MtrG and MtrH.

It carries out the reaction 5-methyl-5,6,7,8-tetrahydromethanopterin + coenzyme M + 2 Na(+)(in) = 5,6,7,8-tetrahydromethanopterin + methyl-coenzyme M + 2 Na(+)(out). It participates in one-carbon metabolism; methanogenesis from CO(2); methyl-coenzyme M from 5,10-methylene-5,6,7,8-tetrahydromethanopterin: step 2/2. Its function is as follows. Part of a complex that catalyzes the formation of methyl-coenzyme M and tetrahydromethanopterin from coenzyme M and methyl-tetrahydromethanopterin. This is an energy-conserving, sodium-ion translocating step. MtrH catalyzes the transfer of the methyl group from methyl-tetrahydromethanopterin to the corrinoid prosthetic group of MtrA. This is Tetrahydromethanopterin S-methyltransferase subunit H from Methanococcus aeolicus (strain ATCC BAA-1280 / DSM 17508 / OCM 812 / Nankai-3).